Here is a 201-residue protein sequence, read N- to C-terminus: Imidazoleglycerol-phosphate dehydratase (201 aa).

The protein belongs to the imidazoleglycerol-phosphate dehydratase family.

The protein localises to the cytoplasm. The catalysed reaction is D-erythro-1-(imidazol-4-yl)glycerol 3-phosphate = 3-(imidazol-4-yl)-2-oxopropyl phosphate + H2O. The protein operates within amino-acid biosynthesis; L-histidine biosynthesis; L-histidine from 5-phospho-alpha-D-ribose 1-diphosphate: step 6/9. The protein is Imidazoleglycerol-phosphate dehydratase of Prochlorococcus marinus (strain MIT 9301).